A 36-amino-acid polypeptide reads, in one-letter code: Lambda-hexatoxin-Hv1a (36 aa).

4 cysteine pairs are disulfide-bonded: cysteine 3/cysteine 17, cysteine 10/cysteine 22, cysteine 13/cysteine 14, and cysteine 16/cysteine 33.

This sequence belongs to the neurotoxin 11 (kappa toxin) family. As to expression, expressed by the venom gland.

It is found in the secreted. In terms of biological role, this excitatory toxin inhibits insect calcium-activated potassium (KCa) channels (Slo-type). This chain is Lambda-hexatoxin-Hv1a, found in Hadronyche versuta (Blue mountains funnel-web spider).